The chain runs to 186 residues: Large ribosomal subunit protein uL5m (186 aa).

It belongs to the universal ribosomal protein uL5 family.

The protein localises to the mitochondrion. The sequence is that of Large ribosomal subunit protein uL5m (RPL5) from Solanum tuberosum (Potato).